The chain runs to 511 residues: Synaptotagmin-6 (511 aa).

The Vesicular segment spans residues methionine 1–serine 59. The interval cysteine 12–glutamine 38 is cysteine motif. Residues leucine 60–phenylalanine 80 form a helical membrane-spanning segment. Residues tryptophan 81–leucine 511 are Cytoplasmic-facing. Low complexity predominate over residues alanine 93–serine 103. Disordered stretches follow at residues alanine 93–lysine 118 and threonine 157–glutamine 182. Positions glutamine 160–histidine 172 are enriched in polar residues. Serine 217 carries the post-translational modification Phosphoserine. C2 domains are found at residues serine 230–lysine 351 and aspartate 362–histidine 495. Positions 261, 267, 319, 320, 321, 324, 327, 393, 399, 453, and 455 each coordinate Ca(2+). Residues methionine 483–leucine 511 form a necessary for cell membrane association (isoform 2) region.

This sequence belongs to the synaptotagmin family. Isoform 1: Homodimer; disulfide-linked via the cysteine motif. Isoform 1: Can also form heterodimers with SYT3, SYT7, SYT9 and SYT10. Isoform 1: Interacts with STX1A, STX1B and STX2; the interaction is Ca(2+)-dependent. Isoform 2: Is not able to form homodimer and heterodimers. Ca(2+) serves as cofactor.

Its subcellular location is the cytoplasmic vesicle. The protein localises to the secretory vesicle. The protein resides in the synaptic vesicle membrane. It is found in the membrane. It localises to the cytoplasm. Its subcellular location is the cytosol. The protein localises to the cell membrane. In terms of biological role, may be involved in Ca(2+)-dependent exocytosis of secretory vesicles through Ca(2+) and phospholipid binding to the C2 domain or may serve as Ca(2+) sensors in the process of vesicular trafficking and exocytosis. May mediate Ca(2+)-regulation of exocytosis in acrosomal reaction in sperm. In Rattus norvegicus (Rat), this protein is Synaptotagmin-6 (Syt6).